Consider the following 535-residue polypeptide: MSKNTKYVFVTGGVVSSLGKGITAASLGRLLKNRGLSVSIQKFDPYLNIDPGTMSPYQHGEVFVTDDGAETDLDLGHYERFIDENLTQNSNVTSGRVYWSVISKERKGEYLGGTVQVIPHITNAIKDRVHRVGKERDVDVVITEIGGTIGDIESLPFLEAIRQIKYDVGKENVCFIHVTLVPYLGKAGELKTKPTQHSVKELRSIGIQPDIIVCRSEKELSEDIKKKIGLFCNIDASEVIQNLDAEHLYAVPLMLHKEGLDRLVCEKLGLGCRDIDNAEWIDMVHRITHLTHTTKIALVGKYVELHDAYISVVEALNHGGLSNDTNVEIEWINAEDVTKENVDELLSGVDGVLVPGGFGDRGVEGKIEAIRWARENKKPFLGICLGMQCAVIEYARNVLGLEGAHSSELNPETPFPVIDLMPEQKDVEDLGGTMRLGLYPCKLEDNTFCKDVYASDLIYERHRHRYEFNNEYRTQLIESGLTIAGTSPDGRLVECVEVKDHPWFVAVQYHPELKSRPNRPHPLFVGFVGAALNNK.

An amidoligase domain region spans residues Met-1–Leu-270. Residue Ser-16 coordinates CTP. Ser-16 provides a ligand contact to UTP. ATP is bound at residue Ser-17 to Ile-22. Tyr-57 contacts L-glutamine. Residue Asp-74 coordinates ATP. Mg(2+) is bound by residues Asp-74 and Glu-144. Residues Asp-151–Glu-153, Lys-191–Gln-196, and Lys-227 each bind CTP. Residues Lys-191 to Gln-196 and Lys-227 contribute to the UTP site. The Glutamine amidotransferase type-1 domain maps to Lys-295–Lys-535. Gly-357 contacts L-glutamine. Cys-384 (nucleophile; for glutamine hydrolysis) is an active-site residue. Residues Leu-385–Gln-388, Glu-408, and Arg-465 each bind L-glutamine. Catalysis depends on residues His-510 and Glu-512.

Belongs to the CTP synthase family. As to quaternary structure, homotetramer.

It catalyses the reaction UTP + L-glutamine + ATP + H2O = CTP + L-glutamate + ADP + phosphate + 2 H(+). The catalysed reaction is L-glutamine + H2O = L-glutamate + NH4(+). It carries out the reaction UTP + NH4(+) + ATP = CTP + ADP + phosphate + 2 H(+). It functions in the pathway pyrimidine metabolism; CTP biosynthesis via de novo pathway; CTP from UDP: step 2/2. Its activity is regulated as follows. Allosterically activated by GTP, when glutamine is the substrate; GTP has no effect on the reaction when ammonia is the substrate. The allosteric effector GTP functions by stabilizing the protein conformation that binds the tetrahedral intermediate(s) formed during glutamine hydrolysis. Inhibited by the product CTP, via allosteric rather than competitive inhibition. Functionally, catalyzes the ATP-dependent amination of UTP to CTP with either L-glutamine or ammonia as the source of nitrogen. Regulates intracellular CTP levels through interactions with the four ribonucleotide triphosphates. This is CTP synthase from Clostridium perfringens (strain ATCC 13124 / DSM 756 / JCM 1290 / NCIMB 6125 / NCTC 8237 / Type A).